The chain runs to 324 residues: UDP-N-acetylenolpyruvoylglucosamine reductase (324 aa).

The 176-residue stretch at 36–211 folds into the FAD-binding PCMH-type domain; the sequence is FRAGGLAELM…AEDKAKIRND (176 aa). The active site involves Arg183. Residue Ser232 is the Proton donor of the active site. Residue Glu302 is part of the active site.

This sequence belongs to the MurB family. FAD is required as a cofactor.

The protein resides in the cytoplasm. It carries out the reaction UDP-N-acetyl-alpha-D-muramate + NADP(+) = UDP-N-acetyl-3-O-(1-carboxyvinyl)-alpha-D-glucosamine + NADPH + H(+). Its pathway is cell wall biogenesis; peptidoglycan biosynthesis. Functionally, cell wall formation. The polypeptide is UDP-N-acetylenolpyruvoylglucosamine reductase (Sinorhizobium medicae (strain WSM419) (Ensifer medicae)).